We begin with the raw amino-acid sequence, 542 residues long: Chitinase 2 (542 aa).

The signal sequence occupies residues 1-22 (MLTRTFLGMAISAFLASTGVQA). One can recognise a GH18 domain in the interval 29–314 (PNVMYYWGQN…SQLYSLVHSG (286 aa)). Catalysis depends on E166, which acts as the Proton donor. The interval 312-356 (HSGGSTPPPPSSSSATKTTTKTTATSTKTTTTTAPTATSTPGSCP) is disordered. The span at 323–354 (SSSATKTTTKTTATSTKTTTTTAPTATSTPGS) shows a compositional bias: low complexity. A chitin-binding, high affinity region spans residues 355–406 (CPVANQPCSTQNQYACTADGKYAVCDHGKWVASSCPSNTVCIPTTDGASIYC). The propeptide occupies 447-542 (AQLAVTSTDK…APSTSAWNFK (96 aa)).

This sequence belongs to the glycosyl hydrolase 18 family. Chitinase class III subfamily. Monomer. Post-translationally, O-glycosylated.

It localises to the secreted. The catalysed reaction is Random endo-hydrolysis of N-acetyl-beta-D-glucosaminide (1-&gt;4)-beta-linkages in chitin and chitodextrins.. Probably involved in the apical growth and branching of fungal hyphae. This Rhizopus oligosporus (Rhizopus microsporus var. oligosporus) protein is Chitinase 2 (CHI2).